Consider the following 197-residue polypeptide: Elongation factor Ts (197 aa).

Residues 81–84 form an involved in Mg(2+) ion dislocation from EF-Tu region; that stretch reads TDFV.

It belongs to the EF-Ts family.

It is found in the cytoplasm. In terms of biological role, associates with the EF-Tu.GDP complex and induces the exchange of GDP to GTP. It remains bound to the aminoacyl-tRNA.EF-Tu.GTP complex up to the GTP hydrolysis stage on the ribosome. The sequence is that of Elongation factor Ts from Thermotoga neapolitana (strain ATCC 49049 / DSM 4359 / NBRC 107923 / NS-E).